Here is a 388-residue protein sequence, read N- to C-terminus: Succinate--CoA ligase [ADP-forming] subunit beta (388 aa).

The ATP-grasp domain occupies 9 to 244 (KQLFAEYGLP…PSQDDPREAH (236 aa)). ATP-binding positions include Lys-46, 53 to 55 (GRG), Glu-99, Thr-102, and Glu-107. Residues Asn-199 and Asp-213 each contribute to the Mg(2+) site. Residues Asn-264 and 321-323 (GIV) contribute to the substrate site.

It belongs to the succinate/malate CoA ligase beta subunit family. In terms of assembly, heterotetramer of two alpha and two beta subunits. The cofactor is Mg(2+).

It catalyses the reaction succinate + ATP + CoA = succinyl-CoA + ADP + phosphate. It carries out the reaction GTP + succinate + CoA = succinyl-CoA + GDP + phosphate. Its pathway is carbohydrate metabolism; tricarboxylic acid cycle; succinate from succinyl-CoA (ligase route): step 1/1. Its function is as follows. Succinyl-CoA synthetase functions in the citric acid cycle (TCA), coupling the hydrolysis of succinyl-CoA to the synthesis of either ATP or GTP and thus represents the only step of substrate-level phosphorylation in the TCA. The beta subunit provides nucleotide specificity of the enzyme and binds the substrate succinate, while the binding sites for coenzyme A and phosphate are found in the alpha subunit. This is Succinate--CoA ligase [ADP-forming] subunit beta from Aeromonas hydrophila subsp. hydrophila (strain ATCC 7966 / DSM 30187 / BCRC 13018 / CCUG 14551 / JCM 1027 / KCTC 2358 / NCIMB 9240 / NCTC 8049).